A 648-amino-acid polypeptide reads, in one-letter code: PTS system N-acetylglucosamine-specific EIICBA component (648 aa).

Met-1 is subject to N-formylmethionine. The region spanning 1–371 (MNILGFFQRL…FNLKTPGRED (371 aa)) is the PTS EIIC type-1 domain. 12 helical membrane-spanning segments follow: residues 16–36 (LPIA…PDLL), 38–58 (VAFI…IFAI), 70–90 (GAAA…MVTI), 92–112 (PEIN…GAAY), 132–152 (FVPI…GYVW), 159–179 (IHAG…IFGF), 192–212 (VLNT…GTVF), 232–252 (GFFP…YFAA), 260–280 (VGGM…TEPL), 282–302 (FLFM…TGIS), 303–323 (LFVA…GAID), and 339–359 (MLLV…SLVI). Residues 390-472 (TQLATNYIAA…KKVVARGPVA (83 aa)) enclose the PTS EIIB type-1 domain. The active-site Phosphocysteine intermediate; for EIIB activity is Cys-412. At Cys-412 the chain carries Phosphocysteine; by EIIA. The 105-residue stretch at 517 to 621 (DEAFASKAVG…SMISPVVCSN (105 aa)) folds into the PTS EIIA type-1 domain. The Zn(2+) site is built by His-554 and His-569. Catalysis depends on His-569, which acts as the Tele-phosphohistidine intermediate; for EIIA activity. His-569 carries the post-translational modification Phosphohistidine; by HPr.

The cofactor is Zn(2+). In terms of processing, 60% of isolated protein was N-formylated.

The protein localises to the cell inner membrane. The catalysed reaction is N(pros)-phospho-L-histidyl-[protein] + N-acetyl-D-glucosamine(out) = N-acetyl-D-glucosamine 6-phosphate(in) + L-histidyl-[protein]. With respect to regulation, P-chloromercuribenzoate inhibits the accumulation of both N-acetyl-D-glucosamine and antibiotic streptozotocin (2-deoxy-2-(3-methyl-3-nitrosoureido)-D-glucopyranose). N-acetyl-D-glucosamine is a competitive inhibitor for the uptake of streptozotocin. Its function is as follows. The phosphoenolpyruvate-dependent sugar phosphotransferase system (sugar PTS), a major carbohydrate active transport system, catalyzes the phosphorylation of incoming sugar substrates concomitantly with their translocation across the cell membrane. This system is involved in N-acetylglucosamine transport. It can also transport and phosphorylate the antibiotic streptozotocin. Could play a significant role in the recycling of peptidoglycan. The chain is PTS system N-acetylglucosamine-specific EIICBA component from Escherichia coli (strain K12).